A 1375-amino-acid polypeptide reads, in one-letter code: DNA-directed RNA polymerase subunit beta (1375 aa).

The protein belongs to the RNA polymerase beta chain family. As to quaternary structure, the RNAP catalytic core consists of 2 alpha, 1 beta, 1 beta' and 1 omega subunit. When a sigma factor is associated with the core the holoenzyme is formed, which can initiate transcription.

The catalysed reaction is RNA(n) + a ribonucleoside 5'-triphosphate = RNA(n+1) + diphosphate. Functionally, DNA-dependent RNA polymerase catalyzes the transcription of DNA into RNA using the four ribonucleoside triphosphates as substrates. The polypeptide is DNA-directed RNA polymerase subunit beta (Malacoplasma penetrans (strain HF-2) (Mycoplasma penetrans)).